Reading from the N-terminus, the 211-residue chain is WUSCHEL-related homeobox 14 (211 aa).

The segment at residues 91–155 (STRHRWTPTS…NRRARSKRKQ (65 aa)) is a DNA-binding region (homeobox; WUS-type). A disordered region spans residues 147 to 183 (RRARSKRKQPQTTTANGQADDVAVTTEERRSCGDSGG).

It belongs to the WUS homeobox family. As to expression, expressed in root vasculature, pericycle and stamen. Expressed in the procambium during stem maturation.

Its subcellular location is the nucleus. In terms of biological role, acts redundantly with WOX4 downstream of the TDR/PXY receptor kinase to regulate procambial cell proliferation and differentiation in vascular tissue, independently of any role in vascular. Involved in the regulation of gibberellin (GA) biosynthesis pathway. Positively regulates the expression of the GA biosynthesis gene GA3OX1, and negatively regulates the expression of GA2OX1 during secondary growth, which increases bioactive GA content in the inflorescence stem. Promotes vascular cell differentiation in the inflorescence stem. Functionally, transcription factor which may be involved in developmental processes. This Arabidopsis thaliana (Mouse-ear cress) protein is WUSCHEL-related homeobox 14 (WOX14).